The sequence spans 248 residues: uncharacterized protein (248 aa).

The signal sequence occupies residues 1–23; sequence MLKKIVIGVTATAAFGIGAGALA.

The protein localises to the cell outer membrane. This is an uncharacterized protein from Coxiella burnetii (strain RSA 493 / Nine Mile phase I).